Here is a 328-residue protein sequence, read N- to C-terminus: DNA-directed RNA polymerase subunit alpha (328 aa).

The interval 1–230 is alpha N-terminal domain (alpha-NTD); that stretch reads MSNHGLQMPE…DHVSFFIQLE (230 aa). The alpha C-terminal domain (alpha-CTD) stretch occupies residues 248–328; the sequence is RIRELLAQPV…EEYLEEKKAS (81 aa).

Belongs to the RNA polymerase alpha chain family. In terms of assembly, homodimer. The RNAP catalytic core consists of 2 alpha, 1 beta, 1 beta' and 1 omega subunit. When a sigma factor is associated with the core the holoenzyme is formed, which can initiate transcription.

It carries out the reaction RNA(n) + a ribonucleoside 5'-triphosphate = RNA(n+1) + diphosphate. DNA-dependent RNA polymerase catalyzes the transcription of DNA into RNA using the four ribonucleoside triphosphates as substrates. This chain is DNA-directed RNA polymerase subunit alpha, found in Salinibacter ruber (strain DSM 13855 / M31).